The following is a 333-amino-acid chain: MARHSFFCVDGHTCGNPVRLVAGGGPNLNGSTMMEKCAHFLAEYDWIRTGLMFEPRGHDMMSGSILYPPTRPDCDVAVLFIETSGCLPMCGHGTIGTVTMAIEQGLVTPKTPGKLNLDTPAGLVAIEYEQDGQYVERVRLTNVPAFLYAEGLEVECPDLGPIKVDVAYGGNFYAIVEPQENYTDMDDYSALQLIAWSPVLRQRLNEKYKFQHPELPDINRLSHILWTGKPKHPQAHARNAVFYGDKAIDRSPCGTGTSARMAQLAAKGKLKPGDEFIHESIIGSLFHGRVERAAEVAGRPAIVPSIAGWARMTGYNTIFIDDRDPFAHGFSAA.

The active-site Proton acceptor is the Cys90. Residues Gly91–His92 and Asp249 contribute to the substrate site. Cys253 serves as the catalytic Proton donor. Gly254 to Thr255 is a substrate binding site.

The protein belongs to the proline racemase family. In terms of assembly, homodimer.

It carries out the reaction trans-4-hydroxy-L-proline = cis-4-hydroxy-D-proline. With respect to regulation, inhibited by iodoacetate, iodoacetamide and by high amounts (10 mM) of pyrrole-2-carboxylic acid (PYC). Not inhibited by PYC at 1 mM. Allows intracellular utilization of 4-hydroxyproline, one of the major constituents of host collagen, by converting 4-hydroxy-L-proline to 4-hydroxy-D-proline, which can be further metabolized by intracellular 4-hydroxy-D-proline oxidases. Strong B-cell mitogen. Plays an important role in the regulation of intra- and extracellular amino acid pools, allowing the bacterium to profit from host precursors and enzymatic pathways. The sequence is that of 4-hydroxyproline epimerase from Brucella melitensis biotype 1 (strain ATCC 23456 / CCUG 17765 / NCTC 10094 / 16M).